The following is an 842-amino-acid chain: DNA mismatch repair protein MutS (842 aa).

Residue 596 to 603 participates in ATP binding; it reads GPNMSGKS.

Belongs to the DNA mismatch repair MutS family.

This protein is involved in the repair of mismatches in DNA. It is possible that it carries out the mismatch recognition step. This protein has a weak ATPase activity. This chain is DNA mismatch repair protein MutS, found in Exiguobacterium sp. (strain ATCC BAA-1283 / AT1b).